The following is a 106-amino-acid chain: UPF0145 protein BF0270 (106 aa).

It belongs to the UPF0145 family.

In Bacteroides fragilis (strain YCH46), this protein is UPF0145 protein BF0270.